The primary structure comprises 244 residues: THO complex subunit 4A (244 aa).

Residues 1–82 (MSTGLDMSLD…EDHRSGRSSA (82 aa)) form a disordered region. The residue at position 2 (serine 2) is an N-acetylserine. Residues 21–35 (GGAGPARGTGSGSGP) are compositionally biased toward gly residues. Over residues 67-77 (MFSDRSEDHRS) the composition is skewed to basic and acidic residues. Residues 88–165 (TKLYISNLDY…KPMKIEIVGT (78 aa)) enclose the RRM domain. Residues 169–244 (TAAAPSGRPA…KYHSGDMETN (76 aa)) form a disordered region. Over residues 187 to 211 (WRGGQGRGGQQRGGGRGGGGRGGGG) the composition is skewed to gly residues. The segment covering 220 to 244 (PAEKISAEDLDADLDKYHSGDMETN) has biased composition (basic and acidic residues).

The protein belongs to the ALYREF family.

It localises to the nucleus. The protein localises to the nucleoplasm. The protein resides in the nucleolus. In terms of biological role, export adapter involved in nuclear export of spliced and unspliced mRNA. This Arabidopsis thaliana (Mouse-ear cress) protein is THO complex subunit 4A (ALY1).